The primary structure comprises 341 residues: N-(sulfonatooxy)alkenimidothioic acid sulfate-lyase (epithionitrile-forming) (341 aa).

The tract at residues 1-24 (MAPTLQGQWIKVGQKGGTGPGPRS) is disordered. 4 Kelch repeats span residues 34–82 (KLYS…VRMV), 87–133 (KIYI…FHSM), 139–194 (HVYV…VVQG), and 203–249 (ATSI…AHAV). The a (Z)-N-(sulfonatooxy)alkanimidothioate site is built by Lys46, Arg94, Thr129, Phe130, Arg157, Gly186, Lys211, and Val244. Arg94 functions as the Proton donor in the catalytic mechanism. Catalysis depends on Arg157, which acts as the Proton donor. Fe(2+) is bound by residues Glu260, Asp264, and His268. A (Z)-N-(sulfonatooxy)alkanimidothioate is bound at residue Trp303.

In terms of assembly, homodimer. Interacts with WRKY53. The cofactor is Fe(2+). Expressed in epidermal cells of all above-ground organs except the anthers, in cambial cells of leaf and stem vascular bundles, and in glucosinolates rich S-cells found in stems just below the inflorescence. Absent from roots.

Its subcellular location is the cytoplasm. The protein resides in the nucleus. The enzyme catalyses a (Z)-N-(sulfonatooxy)alkenimidothioate = an epithionitrile + sulfate. The catalysed reaction is a (Z)-N-(sulfonatooxy)alkanimidothioate = a nitrile + sulfur + sulfate. It carries out the reaction (Z)-(indol-3-yl)-N-(sulfonatooxy)methanimidothioate = (indol-3-yl)acetonitrile + sulfur + sulfate. With respect to regulation, not dependent on the presence of Fe(2+) although supplemental Fe(2+) increases nitriles formation. In terms of biological role, specifier protein that contributes to constitutive and herbivore-induced simple nitrile formation. Converts glucosinolates both to epithionitriles and to simple nitriles in the presence of myrosinase. Promotes the formation of epithionitriles after hydrolysis of alkenylglucosinolates containing a terminal double bond. Mediates indol-3-ylacetonitrile (IACN) production from indol-3-ylmethylglucosinolate (glucobrassicin). Triggers the production of 3,4-epithiobutylnitrile from 2-propenylisothiocyanate, product of 2-propenylglucosinolate (sinigrin) catalysis by myrosinase. Seems inactive toward benzylglucosinolate (glucotropaeolin). Acts as a negative regulator of senescence. The chain is N-(sulfonatooxy)alkenimidothioic acid sulfate-lyase (epithionitrile-forming) from Arabidopsis thaliana (Mouse-ear cress).